We begin with the raw amino-acid sequence, 513 residues long: ATP synthase subunit alpha (513 aa).

Residue Gly-169–Thr-176 coordinates ATP.

The protein belongs to the ATPase alpha/beta chains family. As to quaternary structure, F-type ATPases have 2 components, CF(1) - the catalytic core - and CF(0) - the membrane proton channel. CF(1) has five subunits: alpha(3), beta(3), gamma(1), delta(1), epsilon(1). CF(0) has three main subunits: a(1), b(2) and c(9-12). The alpha and beta chains form an alternating ring which encloses part of the gamma chain. CF(1) is attached to CF(0) by a central stalk formed by the gamma and epsilon chains, while a peripheral stalk is formed by the delta and b chains.

The protein localises to the cell inner membrane. The enzyme catalyses ATP + H2O + 4 H(+)(in) = ADP + phosphate + 5 H(+)(out). Functionally, produces ATP from ADP in the presence of a proton gradient across the membrane. The alpha chain is a regulatory subunit. In Bordetella bronchiseptica (strain ATCC BAA-588 / NCTC 13252 / RB50) (Alcaligenes bronchisepticus), this protein is ATP synthase subunit alpha.